Here is a 550-residue protein sequence, read N- to C-terminus: MATPQQPLLTKTHKQNSIISFKILTFVVTLFVALFLVVFLVAPYQFEIKHSNLCKTAQDSQLCLSYVSDLISNEIVTSDSDGLSILKKFLVYSVHQMNNAIPVVRKIKNQINDIREQGALTDCLELLDLSVDLVCDSIAAIDKRSRSEHANAQSWLSGVLTNHVTCLDELDSFTKAMINGTNLDELISRAKVALAMLASVTTPNDEVLRPGLGKMPSWVSSRDRKLMESSGKDIGANAVVAKDGTGKYRTLAEAVAAAPDKSKTRYVIYVKRGTYKENVEVSSRKMNLMIIGDGMYATIITGSLNVVDGSTTFHSATLAAVGKGFILQDICIQNTAGPAKHQAVALRVGADKSVINRCRIDAYQDTLYAHSQRQFYRDSYVTGTIDFIFGNAAVVFQKCQLVARKPGKYQQNMVTAQGRTDPNQATGTSIQFCDIIASPDLKPVVKEFPTYLGRPWKKYSRTVVMESYLGGLIDPSGWAEWHGDFALKTLYYGEFMNNGPGAGTSKRVKWPGYHVITDPAEAMSFTVAKLIQGGSWLRSTDVAYVDGLYD.

A glycan (N-linked (GlcNAc...) asparagine) is linked at Asn179. Substrate is bound by residues Thr312 and Gln342. A disulfide bridge connects residues Cys331 and Cys358. The active-site Proton donor is Asp365. Residue Asp386 is the Nucleophile of the active site. Residues Cys399 and Cys433 are joined by a disulfide bond. Substrate is bound by residues Arg454 and Trp456.

This sequence in the N-terminal section; belongs to the PMEI family. In the C-terminal section; belongs to the pectinesterase family.

The protein resides in the secreted. The protein localises to the cell wall. The enzyme catalyses [(1-&gt;4)-alpha-D-galacturonosyl methyl ester](n) + n H2O = [(1-&gt;4)-alpha-D-galacturonosyl](n) + n methanol + n H(+). The protein operates within glycan metabolism; pectin degradation; 2-dehydro-3-deoxy-D-gluconate from pectin: step 1/5. Its function is as follows. Pectinesterase may play a role in cell wall metabolism during fruit growth and development prior to ripening and may be required for preparing cell walls for softening by polygalacturonase during fruit ripening. The sequence is that of Pectinesterase 2.1 (PME2.1) from Solanum lycopersicum (Tomato).